The following is a 124-amino-acid chain: Large ribosomal subunit protein bL12 (124 aa).

The protein belongs to the bacterial ribosomal protein bL12 family. As to quaternary structure, homodimer. Part of the ribosomal stalk of the 50S ribosomal subunit. Forms a multimeric L10(L12)X complex, where L10 forms an elongated spine to which 2 to 4 L12 dimers bind in a sequential fashion. Binds GTP-bound translation factors.

In terms of biological role, forms part of the ribosomal stalk which helps the ribosome interact with GTP-bound translation factors. Is thus essential for accurate translation. The polypeptide is Large ribosomal subunit protein bL12 (Desulfitobacterium hafniense (strain DSM 10664 / DCB-2)).